The following is a 426-amino-acid chain: Putative glutamate--cysteine ligase 2 (426 aa).

It belongs to the glutamate--cysteine ligase type 2 family. YbdK subfamily.

It catalyses the reaction L-cysteine + L-glutamate + ATP = gamma-L-glutamyl-L-cysteine + ADP + phosphate + H(+). Its function is as follows. ATP-dependent carboxylate-amine ligase which exhibits weak glutamate--cysteine ligase activity. The protein is Putative glutamate--cysteine ligase 2 of Bradyrhizobium diazoefficiens (strain JCM 10833 / BCRC 13528 / IAM 13628 / NBRC 14792 / USDA 110).